The following is a 226-amino-acid chain: PKHD-type hydroxylase Sfri_0612 (226 aa).

The Fe2OG dioxygenase domain occupies 77–177; sequence KIFPPCFNRY…RIAAITWMQS (101 aa). 3 residues coordinate Fe cation: His95, Asp97, and His158. Residue Arg168 participates in 2-oxoglutarate binding.

Fe(2+) is required as a cofactor. L-ascorbate serves as cofactor.

This is PKHD-type hydroxylase Sfri_0612 from Shewanella frigidimarina (strain NCIMB 400).